The chain runs to 292 residues: ATP synthase gamma chain (292 aa).

Belongs to the ATPase gamma chain family. F-type ATPases have 2 components, CF(1) - the catalytic core - and CF(0) - the membrane proton channel. CF(1) has five subunits: alpha(3), beta(3), gamma(1), delta(1), epsilon(1). CF(0) has three main subunits: a, b and c.

The protein resides in the cell membrane. In terms of biological role, produces ATP from ADP in the presence of a proton gradient across the membrane. The gamma chain is believed to be important in regulating ATPase activity and the flow of protons through the CF(0) complex. The sequence is that of ATP synthase gamma chain from Streptococcus suis (strain 05ZYH33).